The sequence spans 376 residues: MDFSRPSFSPWRWLTLVASLLTCGICQASGQIFISPDSLLGVEKYRTILTLENVPEDVLEYSWYRGKDNSTENMIFSYKPPNTRHPGPSYSGRENVTRAGSLVVRMSAVNDTGYYTVEVDTSNETQRATGWLQIVKLRSNPGISANTSALVEGMDSVVAKCLTNSSNISWYVNFVPTSGSNRMTISPDGKTLIIHRVSRYDHTLQCAIEDVPEILQKSELIQLTVAYGPDYVSLWTQPYFFAGVLTADIGSSVQLECNCFSKPEPRYHWIHNGSFLSIPENNMTLPSLSWEQMGSYRCVVENPETQLTFYRDVTIQPPRPPLPTVNRELYIPGPLVIFLILLTSLGGAFVCRVLVYSLFQSCSRGKTCHKCPWQTN.

The first 30 residues, 1–30 (MDFSRPSFSPWRWLTLVASLLTCGICQASG), serve as a signal peptide directing secretion. The Extracellular segment spans residues 31–330 (QIFISPDSLL…PLPTVNRELY (300 aa)). N69, N95, and N110 each carry an N-linked (GlcNAc...) asparagine glycan. The 86-residue stretch at 229–314 (PDYVSLWTQP…TQLTFYRDVT (86 aa)) folds into the Ig-like C2-type domain. A disulfide bridge connects residues C257 and C298. The helical transmembrane segment at 331-351 (IPGPLVIFLILLTSLGGAFVC) threads the bilayer. The Cytoplasmic portion of the chain corresponds to 352–376 (RVLVYSLFQSCSRGKTCHKCPWQTN).

The protein belongs to the immunoglobulin superfamily. CEA family. As to expression, mostly expressed in the small and large intestine and at lower levels also in other organs.

Its subcellular location is the membrane. The protein is Cell adhesion molecule CEACAM18 of Mus musculus (Mouse).